Reading from the N-terminus, the 520-residue chain is GMP synthase [glutamine-hydrolyzing] (520 aa).

The region spanning 9-202 is the Glutamine amidotransferase type-1 domain; the sequence is KILILDFGSQ…VRKICGCSGK (194 aa). Cysteine 86 serves as the catalytic Nucleophile. Active-site residues include histidine 176 and glutamate 178. In terms of domain architecture, GMPS ATP-PPase spans 203 to 395; sequence WTPGQIIEDA…LGLPHQMVWR (193 aa). 230–236 is a binding site for ATP; sequence SGGVDSS.

As to quaternary structure, homodimer.

It carries out the reaction XMP + L-glutamine + ATP + H2O = GMP + L-glutamate + AMP + diphosphate + 2 H(+). It functions in the pathway purine metabolism; GMP biosynthesis; GMP from XMP (L-Gln route): step 1/1. Its function is as follows. Catalyzes the synthesis of GMP from XMP. This is GMP synthase [glutamine-hydrolyzing] from Geotalea daltonii (strain DSM 22248 / JCM 15807 / FRC-32) (Geobacter daltonii).